The following is a 1136-amino-acid chain: Pesticidal crystal protein Cry4B protoxin (1136 aa).

A domain I region spans residues 84–282 (TPERVWNDFM…PADKIDNTKL (199 aa)). The domain II stretch occupies residues 283–466 (SKTEFTREIY…SNRVSFAWTH (184 aa)). Positions 467–641 (KIVDPNNQIY…PITQSVLDET (175 aa)) are domain III.

The protein belongs to the delta endotoxin family. As to quaternary structure, in the presence of micelles active toxin forms oligomers that can be fit into cryo-EM maps as trimers. Binds to host (A.gambiae) cadherin AgCad1 (also called BT-R3), probably on the cell surface. Activated toxin may bind its host AgCad1 receptor as a monomer, but also forms an oligomer that is not active. Requires Mg(2+) as cofactor. Post-translationally, treatment of recombinant protein with A.aegypti 3rd instar larvae midgut extract for 1 hour yields major bands of 72 and 45 kDa, the combined proteins are toxic to mosquitoes. Longer digestion, which removes the 72 kDa protein, yields a non-toxic preparation. Proteolysis by yields a 65 kDa toxic protein and 48 and 17 kDa fragments which are not toxic. As to expression, host (A.gambiae) larval midgut; binds to host brush border membranes, probably to cadherin-AgCad1 (Cad1, also called BT-R3).

Its subcellular location is the spore. Toxic activity on Trichoplusia ni insect cells stably transfected with the AgCad1/BT-R3 receptor leads to oncosis, cell death characterized by cell swelling, membrane blebbing and depletion of energy reserves. Cell death is blocked by EDTA (but not EGTA) and is partially prevented by pretreatment with NF449 (inhibits G-s-alpha-60A and adenylyl cyclase, AC) and 2',5'-dideoxyadenosine 3'-diphosphate (ddADP, inhibits AC), while H-89 and PKAI 14-22 (both inhibit protein kinase A), ouabain (inhibits Na+/K+-ATPase) and a cell exocytosis inhibitor (Exo1) nearly completely prevent the action of the toxin in this system. The cAMP analog pCPT-cAMP and the AC activator FSK enhance toxicity. Functionally, a pesticidal protein active against Aedes and Anopheles mosquito species; activity on Culex species is strain dependent. It remains toxic to permethrin-resistant strains of A.gambiae. Following activation of the protoxin by mosquito larvae midgut extract (or by chymotrypsin or trypsin treatment) it becomes insecticidal. Causes mosquito cell death by activating a host G-protein-coupled receptor which subsequently activates adenylyl cyclase and increases cAMP production. cAMP activates protein kinase A which sets off a series of downstream events which includes increased exocytosis (probably bringing more receptor to the cell membrane), Na+/K+-ATPase activation and eventual host cell death. Another group suggests that alkaline phosphatase serves as the insect receptor and that the protein forms pores in insect cell membranes. The protein is Pesticidal crystal protein Cry4B protoxin of Bacillus thuringiensis subsp. israelensis.